The primary structure comprises 157 residues: Small ribosomal subunit protein bS16 (157 aa).

Positions 125 to 141 (KRKAAKKAAEEAAAKEA) are enriched in basic and acidic residues. A disordered region spans residues 125-157 (KRKAAKKAAEEAAAKEAEAEEAAEDKAEEESAE). Residues 142–157 (EAEEAAEDKAEEESAE) show a composition bias toward acidic residues.

It belongs to the bacterial ribosomal protein bS16 family.

This Corynebacterium kroppenstedtii (strain DSM 44385 / JCM 11950 / CIP 105744 / CCUG 35717) protein is Small ribosomal subunit protein bS16.